We begin with the raw amino-acid sequence, 411 residues long: Adenylosuccinate synthetase (411 aa).

GTP is bound by residues 11 to 17 (GDEGKGK) and 39 to 41 (GHT). Catalysis depends on D12, which acts as the Proton acceptor. The Mg(2+) site is built by D12 and G39. IMP is bound by residues 12–15 (DEGK), 37–40 (NAGH), T121, R135, Q215, T230, and R294. H40 serves as the catalytic Proton donor. 290 to 296 (TTTKRPR) is a substrate binding site. GTP is bound by residues R296, 322-324 (KLD), and 400-402 (STS).

The protein belongs to the adenylosuccinate synthetase family. As to quaternary structure, homodimer. The cofactor is Mg(2+).

It localises to the cytoplasm. It catalyses the reaction IMP + L-aspartate + GTP = N(6)-(1,2-dicarboxyethyl)-AMP + GDP + phosphate + 2 H(+). It participates in purine metabolism; AMP biosynthesis via de novo pathway; AMP from IMP: step 1/2. In terms of biological role, plays an important role in the de novo pathway of purine nucleotide biosynthesis. Catalyzes the first committed step in the biosynthesis of AMP from IMP. This is Adenylosuccinate synthetase from Helicobacter pylori (strain P12).